We begin with the raw amino-acid sequence, 234 residues long: Demethylmenaquinone methyltransferase (234 aa).

S-adenosyl-L-methionine is bound by residues T62, D80, 100 to 101 (DA), and S117.

It belongs to the class I-like SAM-binding methyltransferase superfamily. MenG/UbiE family.

The enzyme catalyses a 2-demethylmenaquinol + S-adenosyl-L-methionine = a menaquinol + S-adenosyl-L-homocysteine + H(+). It participates in quinol/quinone metabolism; menaquinone biosynthesis; menaquinol from 1,4-dihydroxy-2-naphthoate: step 2/2. Functionally, methyltransferase required for the conversion of demethylmenaquinol (DMKH2) to menaquinol (MKH2). The polypeptide is Demethylmenaquinone methyltransferase (Mycobacterium bovis (strain ATCC BAA-935 / AF2122/97)).